The primary structure comprises 308 residues: Acetaldehyde dehydrogenase 1 (308 aa).

10–13 (SGNI) is an NAD(+) binding site. The Acyl-thioester intermediate role is filled by cysteine 128. NAD(+)-binding positions include 159-167 (SAGPGTRAN) and asparagine 285.

This sequence belongs to the acetaldehyde dehydrogenase family.

It catalyses the reaction acetaldehyde + NAD(+) + CoA = acetyl-CoA + NADH + H(+). This is Acetaldehyde dehydrogenase 1 from Salinispora arenicola (strain CNS-205).